A 779-amino-acid polypeptide reads, in one-letter code: Glutathione biosynthesis bifunctional protein GshAB (779 aa).

The glutamate--cysteine ligase stretch occupies residues 1 to 346; the sequence is MAFSKNILDS…ETANRNQEQA (346 aa). Residues 512-768 form the ATP-grasp domain; it reads KKILDQAGIN…LDDKILDALG (257 aa). 539-597 is an ATP binding site; it reads PYYRGRAIVIKPKSTNFGIGITIIKENNRHDFFAQGIAQAFKHEATVLIENFSSGKEYR. Positions 719, 738, and 740 each coordinate Mg(2+). Asp-719, Glu-738, and Asn-740 together coordinate Mn(2+).

The protein in the N-terminal section; belongs to the glutamate--cysteine ligase type 1 family. Type 2 subfamily. In terms of assembly, monomer. Mg(2+) is required as a cofactor. Requires Mn(2+) as cofactor.

The catalysed reaction is L-cysteine + L-glutamate + ATP = gamma-L-glutamyl-L-cysteine + ADP + phosphate + H(+). The enzyme catalyses gamma-L-glutamyl-L-cysteine + glycine + ATP = glutathione + ADP + phosphate + H(+). It participates in sulfur metabolism; glutathione biosynthesis; glutathione from L-cysteine and L-glutamate: step 1/2. The protein operates within sulfur metabolism; glutathione biosynthesis; glutathione from L-cysteine and L-glutamate: step 2/2. In terms of biological role, synthesizes glutathione from L-glutamate and L-cysteine via gamma-L-glutamyl-L-cysteine. The protein is Glutathione biosynthesis bifunctional protein GshAB of Desulfotalea psychrophila (strain LSv54 / DSM 12343).